We begin with the raw amino-acid sequence, 229 residues long: Peroxiredoxin-like 2A (229 aa).

The thioredoxin fold stretch occupies residues 14–112 (MWSIGVGAFG…DELGVPLYAV (99 aa)). Residues Cys85 and Cys88 each act as redox-active in the active site.

It belongs to the peroxiredoxin-like PRXL2 family. PRXL2A subfamily. As to expression, expressed by the principal cells of the epididymis. Detected in the head region of epididymal sperm (at protein level). Expressed in bone marrow.

It localises to the cytoplasm. The protein resides in the secreted. In terms of biological role, involved in redox regulation of the cell. Acts as an antioxidant. Inhibits TNFSF11-induced NFKB1 and JUN activation and osteoclast differentiation. May affect bone resorption and help to maintain bone mass. Acts as a negative regulator of macrophage-mediated inflammation by inhibiting macrophage production of inflammatory cytokines, probably through suppression of the MAPK signaling pathway. This Rattus norvegicus (Rat) protein is Peroxiredoxin-like 2A.